The chain runs to 208 residues: 3-demethoxyubiquinol 3-hydroxylase (208 aa).

The Fe cation site is built by Glu57, Glu87, His90, Glu139, Glu171, and His174.

This sequence belongs to the COQ7 family. The cofactor is Fe cation.

Its subcellular location is the cell membrane. The enzyme catalyses a 5-methoxy-2-methyl-3-(all-trans-polyprenyl)benzene-1,4-diol + AH2 + O2 = a 3-demethylubiquinol + A + H2O. Its pathway is cofactor biosynthesis; ubiquinone biosynthesis. In terms of biological role, catalyzes the hydroxylation of 2-nonaprenyl-3-methyl-6-methoxy-1,4-benzoquinol during ubiquinone biosynthesis. The protein is 3-demethoxyubiquinol 3-hydroxylase of Nitrosomonas eutropha (strain DSM 101675 / C91 / Nm57).